The sequence spans 351 residues: uncharacterized protein (351 aa).

Mn(2+)-binding residues include Asp215, Asp226, His290, Glu319, and Glu333.

The protein belongs to the peptidase M24B family. The cofactor is Mn(2+).

This is an uncharacterized protein from Staphylococcus haemolyticus (strain JCSC1435).